A 115-amino-acid chain; its full sequence is Large ribosomal subunit protein uL22 (115 aa).

The protein belongs to the universal ribosomal protein uL22 family. As to quaternary structure, part of the 50S ribosomal subunit.

Functionally, this protein binds specifically to 23S rRNA; its binding is stimulated by other ribosomal proteins, e.g. L4, L17, and L20. It is important during the early stages of 50S assembly. It makes multiple contacts with different domains of the 23S rRNA in the assembled 50S subunit and ribosome. In terms of biological role, the globular domain of the protein is located near the polypeptide exit tunnel on the outside of the subunit, while an extended beta-hairpin is found that lines the wall of the exit tunnel in the center of the 70S ribosome. This Thioalkalivibrio sulfidiphilus (strain HL-EbGR7) protein is Large ribosomal subunit protein uL22.